The sequence spans 1374 residues: Probable multidrug resistance-associated protein lethal(2)03659 (1374 aa).

A disordered region spans residues 1–40 (MDKQPVLEPTFDSVSERENTSIEESSLLENNGFDHRNKDE). A run of 6 helical transmembrane segments spans residues 159–179 (LLRV…VVEL), 205–225 (AGFY…MILT), 282–302 (YTVH…YLMY), 305–325 (IGIS…IQMY), 404–424 (IFLS…EIAF), and 426–446 (ITAY…SAII). Positions 168–449 (GFPGLAIFVV…YVPSAIIQTA (282 aa)) constitute an ABC transmembrane type-1 1 domain. The segment at 466 to 492 (ELGSSDKSEGPSKDTVPGNPPSNNNEA) is disordered. Residues 499–722 (ISIRDLKAKW…GLITGLGSLS (224 aa)) form the ABC transporter 1 domain. 534–541 (GLTGSGKS) is an ATP binding site. N-linked (GlcNAc...) asparagine glycosylation is present at N561. A disordered region spans residues 723-766 (KTDKAKTEEQEPLNLNSPDNKNEVTPIKENSEQTVGGSSSGKEH). The next 5 membrane-spanning stretches (helical) occupy residues 787-807 (GGGL…QVAV), 845-865 (LIII…FNIA), 913-933 (VVLV…IVIA), 938-958 (LLLV…NLYL), and 1025-1045 (YCMN…FFAF). The 287-residue stretch at 793-1079 (FLVMLSSSVL…GVRQTAELEN (287 aa)) folds into the ABC transmembrane type-1 2 domain. The ABC transporter 2 domain occupies 1119–1352 (FKELNLRYTP…SDSKVFHNLV (234 aa)). Residue 1153 to 1160 (GRTGAGKS) participates in ATP binding. 2 N-linked (GlcNAc...) asparagine glycosylation sites follow: N1254 and N1353.

The protein belongs to the ABC transporter superfamily. ABCC family. Conjugate transporter (TC 3.A.1.208) subfamily. In terms of tissue distribution, uniform expression in embryos.

It localises to the membrane. Functionally, vital for development. This Drosophila melanogaster (Fruit fly) protein is Probable multidrug resistance-associated protein lethal(2)03659 (l(2)03659).